Consider the following 371-residue polypeptide: Large ribosomal subunit protein bL27m (371 aa).

A mitochondrion-targeting transit peptide spans 1–27 (MWNPILLDTSSFSFQKHVSGVFLQVRN).

The protein belongs to the bacterial ribosomal protein bL27 family. As to quaternary structure, component of the mitochondrial large ribosomal subunit (mt-LSU). Mature yeast 74S mitochondrial ribosomes consist of a small (37S) and a large (54S) subunit. The 37S small subunit contains a 15S ribosomal RNA (15S mt-rRNA) and 34 different proteins. The 54S large subunit contains a 21S rRNA (21S mt-rRNA) and 46 different proteins.

It localises to the mitochondrion. Functionally, component of the mitochondrial ribosome (mitoribosome), a dedicated translation machinery responsible for the synthesis of mitochondrial genome-encoded proteins, including at least some of the essential transmembrane subunits of the mitochondrial respiratory chain. The mitoribosomes are attached to the mitochondrial inner membrane and translation products are cotranslationally integrated into the membrane. This chain is Large ribosomal subunit protein bL27m (MRP7), found in Saccharomyces cerevisiae (strain ATCC 204508 / S288c) (Baker's yeast).